A 97-amino-acid polypeptide reads, in one-letter code: DNA/RNA-binding protein Alba (97 aa).

K15 is subject to N6-acetyllysine.

It belongs to the histone-like Alba family. Post-translationally, acetylated. Acetylation at Lys-15 decreases DNA-binding affinity.

The protein resides in the cytoplasm. It localises to the chromosome. Functionally, binds double-stranded DNA tightly but without sequence specificity. Involved in DNA compaction. This chain is DNA/RNA-binding protein Alba, found in Ignicoccus hospitalis (strain KIN4/I / DSM 18386 / JCM 14125).